We begin with the raw amino-acid sequence, 108 residues long: Nucleoid-associated protein Bphy_0952 (108 aa).

A disordered region spans residues 87 to 108 (AQEKMGGMTSGLPLPPGFKLPF). Residues 99–108 (PLPPGFKLPF) are compositionally biased toward pro residues.

Belongs to the YbaB/EbfC family. As to quaternary structure, homodimer.

It localises to the cytoplasm. Its subcellular location is the nucleoid. Its function is as follows. Binds to DNA and alters its conformation. May be involved in regulation of gene expression, nucleoid organization and DNA protection. This chain is Nucleoid-associated protein Bphy_0952, found in Paraburkholderia phymatum (strain DSM 17167 / CIP 108236 / LMG 21445 / STM815) (Burkholderia phymatum).